The sequence spans 456 residues: Phosphomannomutase (456 aa).

Serine 98 functions as the Phosphoserine intermediate in the catalytic mechanism. Residues serine 98, aspartate 246, aspartate 248, and aspartate 250 each contribute to the Mg(2+) site.

Belongs to the phosphohexose mutase family. Requires Mg(2+) as cofactor.

It carries out the reaction alpha-D-mannose 1-phosphate = D-mannose 6-phosphate. The protein operates within nucleotide-sugar biosynthesis; GDP-alpha-D-mannose biosynthesis; alpha-D-mannose 1-phosphate from D-fructose 6-phosphate: step 2/2. It functions in the pathway bacterial outer membrane biogenesis; LPS O-antigen biosynthesis. Functionally, involved in GDP-mannose biosynthesis which serves as the activated sugar nucleotide precursor for mannose residues in cell surface polysaccharides. This enzyme participates in synthesis of the LPS O9 antigen. The polypeptide is Phosphomannomutase (manB) (Escherichia coli).